The primary structure comprises 298 residues: N-acetylmuramic acid 6-phosphate etherase (298 aa).

Residues 55 to 218 (IHAQVSGGGR…STGLMIKSGK (164 aa)) form the SIS domain. The Proton donor role is filled by Glu-83. Residue Glu-114 is part of the active site.

This sequence belongs to the GCKR-like family. MurNAc-6-P etherase subfamily. As to quaternary structure, homodimer.

The catalysed reaction is N-acetyl-D-muramate 6-phosphate + H2O = N-acetyl-D-glucosamine 6-phosphate + (R)-lactate. It functions in the pathway amino-sugar metabolism; 1,6-anhydro-N-acetylmuramate degradation. Its pathway is amino-sugar metabolism; N-acetylmuramate degradation. The protein operates within cell wall biogenesis; peptidoglycan recycling. Functionally, specifically catalyzes the cleavage of the D-lactyl ether substituent of MurNAc 6-phosphate, producing GlcNAc 6-phosphate and D-lactate. Together with AnmK, is also required for the utilization of anhydro-N-acetylmuramic acid (anhMurNAc) either imported from the medium or derived from its own cell wall murein, and thus plays a role in cell wall recycling. In Shigella sonnei (strain Ss046), this protein is N-acetylmuramic acid 6-phosphate etherase.